The sequence spans 341 residues: Retinol dehydrogenase 10 (341 aa).

A helical; Signal-anchor transmembrane segment spans residues 3 to 23 (IVVEFFVVTFKVLWAFVLAAA). 40–64 (LITGAGSGLGRLFALEFARRRALLV) is an NADP(+) binding site. Ser-197 contacts substrate. Tyr-210 acts as the Proton acceptor in catalysis.

This sequence belongs to the short-chain dehydrogenases/reductases (SDR) family. Detected in retinal pigment epithelium (at protein level). Detected in retina, retinal pigment epithelium, and at lower levels in cornea, liver, kidney, pancreas, lung, brain and skeletal muscle.

It localises to the microsome membrane. The protein localises to the endoplasmic reticulum membrane. It carries out the reaction all-trans-retinol + NADP(+) = all-trans-retinal + NADPH + H(+). The protein operates within cofactor metabolism; retinol metabolism. Retinol dehydrogenase with a clear preference for NADP. Converts all-trans-retinol to all-trans-retinal. Has no detectable activity towards 11-cis-retinol, 9-cis-retinol and 13-cis-retinol. In Bos taurus (Bovine), this protein is Retinol dehydrogenase 10 (RDH10).